Consider the following 255-residue polypeptide: MLEKILATKREEISQLQLPEKQYFPKKSLKASLQKTSLPLGLIAEIKQASPSKGVLCETISPTAIARVYEEGGASAISVLTDRTYFQGDTAYVAEVKKTVSLPVLRKDFILSPLQVEETACIGADAMLLIAGAMEAKQLHELYELAYSKGLECLVEVHSEEELESLLAVFTPEVIGINNRNLKTFQTSVSQTEQIAKMVPKEALLVSESGIHTPDDIARVKKAGANAVLIGEQLMRKDDKRQAIIDLFSESAINQ.

It belongs to the TrpC family.

It carries out the reaction 1-(2-carboxyphenylamino)-1-deoxy-D-ribulose 5-phosphate + H(+) = (1S,2R)-1-C-(indol-3-yl)glycerol 3-phosphate + CO2 + H2O. It functions in the pathway amino-acid biosynthesis; L-tryptophan biosynthesis; L-tryptophan from chorismate: step 4/5. The chain is Indole-3-glycerol phosphate synthase from Shouchella clausii (strain KSM-K16) (Alkalihalobacillus clausii).